The following is a 235-amino-acid chain: Uridylate kinase (235 aa).

Residue 9–12 (KLSG) participates in ATP binding. Residues 17–22 (GNQGYG) form an involved in allosteric activation by GTP region. Position 51 (Gly51) interacts with UMP. The ATP site is built by Gly52 and Arg56. Residues Asp71 and 132 to 139 (CGNPFFTT) contribute to the UMP site. Thr159, Tyr165, and Asp168 together coordinate ATP.

This sequence belongs to the UMP kinase family. As to quaternary structure, homohexamer.

The protein localises to the cytoplasm. It carries out the reaction UMP + ATP = UDP + ADP. It functions in the pathway pyrimidine metabolism; CTP biosynthesis via de novo pathway; UDP from UMP (UMPK route): step 1/1. With respect to regulation, allosterically activated by GTP. Inhibited by UTP. Its function is as follows. Catalyzes the reversible phosphorylation of UMP to UDP. The protein is Uridylate kinase of Synechococcus sp. (strain CC9311).